The following is a 957-amino-acid chain: Receptor-like protein 53 (957 aa).

Residues 1 to 30 (MEGFWNSKSIIRITLSFIFLFICHFLDVLA) form the signal peptide. Topologically, residues 31-910 (APTRNLCRPE…EEEDEDLISW (880 aa)) are extracellular. N-linked (GlcNAc...) asparagine glycosylation is found at N78, N114, N143, N167, and N191. 12 LRR repeats span residues 120 to 143 (LHFL…SIEN), 144 to 170 (LSHL…NLSR), 172 to 192 (TYLN…ICNL), 193 to 216 (SHLT…IGGL), 217 to 240 (SHLT…IGNL), 241 to 266 (SNLT…NLSQ), 268 to 287 (TFLG…SFGN), 288 to 312 (LNQL…LLNL), 313 to 336 (TGLS…ITSL), 338 to 360 (NLMD…LFTI), 361 to 384 (PSLT…NISS), and 386 to 409 (SNLY…ISKL). N-linked (GlcNAc...) asparagine glycans are attached at residues N239, N242, N252, and N263. N311 and N332 each carry an N-linked (GlcNAc...) asparagine glycan. The N-linked (GlcNAc...) asparagine glycan is linked to N381. The stretch at 412-433 (LFRLDISHLNTQGPVDFSIFSH) is one LRR 13; degenerate repeat. LRR repeat units lie at residues 434-458 (LKSL…YFLS), 460-483 (FKRL…SVSD), 486-509 (SQLI…VRTQ), 510-533 (HELG…LWRL), 535-556 (ILYY…SKPE), 558-580 (SLLY…ICGL), 581-604 (RSLN…MGHL), 605-629 (KSTL…IFEI), 631-651 (RSLD…LSFF), 652-674 (STLE…WLSS), 675-697 (LPKL…EATF), 698-721 (PELR…YFVK), 765-789 (LTIY…IGLL), 790-813 (KELL…MGNL), 814-837 (TALE…LGDL), and 839-862 (FLAY…QFLT). N441, N446, and N477 each carry an N-linked (GlcNAc...) asparagine glycan. N540 and N543 each carry an N-linked (GlcNAc...) asparagine glycan. A glycan (N-linked (GlcNAc...) asparagine) is linked at N594. N-linked (GlcNAc...) asparagine glycosylation occurs at N665. N711 is a glycosylation site (N-linked (GlcNAc...) asparagine). The N-linked (GlcNAc...) asparagine glycan is linked to N812. 2 N-linked (GlcNAc...) asparagine glycosylation sites follow: N844 and N864. Residues 911 to 931 (IAAAIGFGPGIAFGLMFGYIL) traverse the membrane as a helical segment. The Cytoplasmic portion of the chain corresponds to 932 to 957 (VSYKPEWFMNPFDRNNRRQKRHKTTH).

The protein belongs to the RLP family.

It localises to the cell membrane. The polypeptide is Receptor-like protein 53 (Arabidopsis thaliana (Mouse-ear cress)).